Reading from the N-terminus, the 611-residue chain is Rho-related BTB domain-containing protein 3 (611 aa).

Residues 1 to 175 (MSIHIVALGN…KELGATYLEL (175 aa)) form a rho-like region. BTB domains are found at residues 254–356 (VDVV…QWEE) and 420–487 (ADVV…CPAG). An interaction with Rab9 region spans residues 420–611 (ADVVFEIQGT…HSRKCRCLVM (192 aa)).

In terms of assembly, interacts with RAB9A and RAB9B (at lower level compared to RAB9A-binding). Interacts with M6PRBP1/TIP47. Ubiquitous. Highly expressed in neural and cardiac tissues, pancreas, placenta and testis.

It localises to the golgi apparatus. Its function is as follows. Rab9-regulated ATPase required for endosome to Golgi transport. Involved in transport vesicle docking at the Golgi complex, possibly by participating in release M6PRBP1/TIP47 from vesicles to permit their efficient docking and fusion at the Golgi. Specifically binds Rab9, but not other Rab proteins. Has low intrinsic ATPase activity due to autoinhibition, which is relieved by Rab9. The sequence is that of Rho-related BTB domain-containing protein 3 (RHOBTB3) from Homo sapiens (Human).